The primary structure comprises 370 residues: Metallophosphoesterase 1 homolog (370 aa).

The helical transmembrane segment at 7–27 threads the bilayer; it reads CFVIVLCALIFCEYVADFVVL. Positions 52, 94, 132, 225, 275, and 277 each coordinate a divalent metal cation. A helical membrane pass occupies residues 328-348; sequence FVFNSYLSAGILCLIVIGFQL.

It belongs to the metallophosphoesterase superfamily. MPPE1 family. The cofactor is Mn(2+).

Its subcellular location is the membrane. In terms of biological role, metallophosphoesterase. This Drosophila melanogaster (Fruit fly) protein is Metallophosphoesterase 1 homolog (PGAP5).